A 165-amino-acid chain; its full sequence is Nucleotide-binding protein P9301_05061 (165 aa).

This sequence belongs to the YajQ family.

Its function is as follows. Nucleotide-binding protein. The polypeptide is Nucleotide-binding protein P9301_05061 (Prochlorococcus marinus (strain MIT 9301)).